The chain runs to 341 residues: HTH-type transcriptional repressor PurR (341 aa).

In terms of domain architecture, HTH lacI-type spans 2 to 56 (ATIKDVAKRANVSTTTVSHVINKTRFVAEETRNAVWTAIKELHYSPSAVARSLKV). The segment at residues 4-23 (IKDVAKRANVSTTTVSHVIN) is a DNA-binding region (H-T-H motif). The DNA-binding element occupies 48–56 (SAVARSLKV). The hypoxanthine site is built by Tyr73, Arg190, Thr192, Phe221, and Asp275.

In terms of assembly, homodimer.

It functions in the pathway purine metabolism; purine nucleotide biosynthesis [regulation]. Functionally, is the main repressor of the genes involved in the de novo synthesis of purine nucleotides, regulating purB, purC, purEK, purF, purHD, purL, purMN and guaBA expression. PurR is allosterically activated to bind its cognate DNA by binding the purine corepressors, hypoxanthine or guanine, thereby effecting transcription repression. The protein is HTH-type transcriptional repressor PurR of Salmonella paratyphi A (strain ATCC 9150 / SARB42).